The following is a 174-amino-acid chain: NADH-ubiquinone oxidoreductase chain 6 (174 aa).

The next 6 membrane-spanning stretches (helical) occupy residues 1–21 (MTYALFLLSVSLVMGFVGFSS), 24–44 (SPIYGGLVLIVSGVVGCAIIL), 47–67 (GGGYMGLMVFLIYLGGMMVVF), 86–106 (VEVLVSVLVGLAMEVGLVLWV), 111–131 (GMVVVVNFNSVGSWMIYEGEG), and 151–171 (WLVVVTGWTLFVGVYIVIEIA).

It belongs to the complex I subunit 6 family. In terms of assembly, core subunit of respiratory chain NADH dehydrogenase (Complex I) which is composed of 45 different subunits.

Its subcellular location is the mitochondrion inner membrane. It catalyses the reaction a ubiquinone + NADH + 5 H(+)(in) = a ubiquinol + NAD(+) + 4 H(+)(out). In terms of biological role, core subunit of the mitochondrial membrane respiratory chain NADH dehydrogenase (Complex I) which catalyzes electron transfer from NADH through the respiratory chain, using ubiquinone as an electron acceptor. Essential for the catalytic activity and assembly of complex I. This Pan troglodytes (Chimpanzee) protein is NADH-ubiquinone oxidoreductase chain 6 (MT-ND6).